The chain runs to 442 residues: Asparagine--tRNA ligase (442 aa).

This sequence belongs to the class-II aminoacyl-tRNA synthetase family. As to quaternary structure, homodimer.

The protein localises to the cytoplasm. It catalyses the reaction tRNA(Asn) + L-asparagine + ATP = L-asparaginyl-tRNA(Asn) + AMP + diphosphate + H(+). This Koribacter versatilis (strain Ellin345) protein is Asparagine--tRNA ligase.